Consider the following 273-residue polypeptide: Large ribosomal subunit protein uL2 (273 aa).

Disordered stretches follow at residues 30–50 (YAPL…GRIT) and 221–273 (RGTA…RRGK). The span at 253 to 273 (KGKKTRHNKRTDKFIVRRRGK) shows a compositional bias: basic residues.

The protein belongs to the universal ribosomal protein uL2 family. In terms of assembly, part of the 50S ribosomal subunit. Forms a bridge to the 30S subunit in the 70S ribosome.

Its function is as follows. One of the primary rRNA binding proteins. Required for association of the 30S and 50S subunits to form the 70S ribosome, for tRNA binding and peptide bond formation. It has been suggested to have peptidyltransferase activity; this is somewhat controversial. Makes several contacts with the 16S rRNA in the 70S ribosome. In Pasteurella multocida (strain Pm70), this protein is Large ribosomal subunit protein uL2.